Reading from the N-terminus, the 89-residue chain is Small ribosomal subunit protein bS20 (89 aa).

The protein belongs to the bacterial ribosomal protein bS20 family.

Functionally, binds directly to 16S ribosomal RNA. The protein is Small ribosomal subunit protein bS20 of Wolbachia pipientis wMel.